Reading from the N-terminus, the 417-residue chain is Tyrosine--tRNA ligase (417 aa).

An L-tyrosine-binding site is contributed by Tyr34. Residues 39 to 48 (PTGDSMHIGH) carry the 'HIGH' region motif. Positions 165 and 169 each coordinate L-tyrosine. A 'KMSKS' region motif is present at residues 227–231 (KFGKS). Residue Lys230 participates in ATP binding. Residues 349 to 417 (ENIVLWLVDT…KKKYFLARVK (69 aa)) form the S4 RNA-binding domain.

This sequence belongs to the class-I aminoacyl-tRNA synthetase family. TyrS type 1 subfamily. As to quaternary structure, homodimer.

The protein localises to the cytoplasm. It catalyses the reaction tRNA(Tyr) + L-tyrosine + ATP = L-tyrosyl-tRNA(Tyr) + AMP + diphosphate + H(+). Catalyzes the attachment of tyrosine to tRNA(Tyr) in a two-step reaction: tyrosine is first activated by ATP to form Tyr-AMP and then transferred to the acceptor end of tRNA(Tyr). The sequence is that of Tyrosine--tRNA ligase from Pediococcus pentosaceus (strain ATCC 25745 / CCUG 21536 / LMG 10740 / 183-1w).